A 375-amino-acid chain; its full sequence is Platelet-derived growth factor receptor-like protein (375 aa).

The signal sequence occupies residues 1 to 17 (MKVWLLLGLLLLHEALG). Positions 19 to 63 (VAGQHPPKNKRPKEQGENRIKPTNKKAKPKIPKIKDRDTADSAPK) are disordered. A compositionally biased stretch (basic residues) spans 40-50 (PTNKKAKPKIP). Positions 62–159 (PKSQSIMMQA…GYICRRDEAR (98 aa)) constitute an Ig-like C2-type 1 domain. A disulfide bridge connects residues Cys-96 and Cys-143. N-linked (GlcNAc...) asparagine glycosylation is present at Asn-219. One can recognise an Ig-like C2-type 2 domain in the interval 272–375 (PSTTILASSN…TTVATTVEFS (104 aa)). Cysteines 293 and 357 form a disulfide.

As to quaternary structure, forms a complex composed of PDGFRL, TNK2 and GRB2.

It is found in the secreted. The chain is Platelet-derived growth factor receptor-like protein (Pdgfrl) from Rattus norvegicus (Rat).